We begin with the raw amino-acid sequence, 79 residues long: Ponericin-W-like 32.1 (79 aa).

The first 23 residues, 1–23 (MKCKKQLLVIFFAYFLVVNESEA), serve as a signal peptide directing secretion. A propeptide spanning residues 49–79 (RALMKRDLEDIMDPYQKNLKLDRYLRRLAMD) is cleaved from the precursor.

It belongs to the non-disulfide-bridged peptide (NDBP) superfamily. Medium-length antimicrobial peptide (group 3) family. Ponericin-W subfamily. In terms of tissue distribution, expressed by the venom gland.

The protein resides in the secreted. It localises to the target cell membrane. In terms of biological role, antimicrobial peptide with potent activity against a range of Gram-positive and Gram-negative bacteria. Has high hemolytic activity against erythrocytes. May act by disrupting the integrity of the bacterial cell membrane. This chain is Ponericin-W-like 32.1, found in Lychas mucronatus (Chinese swimming scorpion).